A 200-amino-acid chain; its full sequence is NADH-quinone oxidoreductase subunit I 1 (200 aa).

4Fe-4S ferredoxin-type domains follow at residues 52-82 and 98-127; these read LNRH…VEGA and RVYQ…MTNE. [4Fe-4S] cluster is bound by residues Cys62, Cys65, Cys68, Cys72, Cys107, Cys110, Cys113, and Cys117. Residues 181 to 200 form a disordered region; the sequence is TERQVAVSKGEKPQDEGVEA. Basic and acidic residues predominate over residues 189–200; the sequence is KGEKPQDEGVEA.

Belongs to the complex I 23 kDa subunit family. NDH-1 is composed of 14 different subunits. Subunits NuoA, H, J, K, L, M, N constitute the membrane sector of the complex. Requires [4Fe-4S] cluster as cofactor.

The protein localises to the cell membrane. The enzyme catalyses a quinone + NADH + 5 H(+)(in) = a quinol + NAD(+) + 4 H(+)(out). Its function is as follows. NDH-1 shuttles electrons from NADH, via FMN and iron-sulfur (Fe-S) centers, to quinones in the respiratory chain. The immediate electron acceptor for the enzyme in this species is believed to be ubiquinone. Couples the redox reaction to proton translocation (for every two electrons transferred, four hydrogen ions are translocated across the cytoplasmic membrane), and thus conserves the redox energy in a proton gradient. This chain is NADH-quinone oxidoreductase subunit I 1, found in Streptomyces avermitilis (strain ATCC 31267 / DSM 46492 / JCM 5070 / NBRC 14893 / NCIMB 12804 / NRRL 8165 / MA-4680).